The sequence spans 371 residues: Cytochrome b (371 aa).

4 helical membrane-spanning segments follow: residues 25 to 45 (FGSM…FLAI), 69 to 90 (WIMQ…YIHI), 105 to 125 (WLSG…GYVL), and 170 to 190 (FFAL…IHIM). His-75 and His-89 together coordinate heme b. His-174 and His-188 together coordinate heme b. His-193 lines the a ubiquinone pocket. 4 helical membrane-spanning segments follow: residues 218-238 (HKDI…MSFS), 280-300 (LGGT…PFTH), 312-332 (IMQL…WAAT), and 339-358 (FTII…IMNP).

It belongs to the cytochrome b family. The cytochrome bc1 complex contains 3 respiratory subunits (MT-CYB, CYC1 and UQCRFS1), 2 core proteins (UQCRC1 and UQCRC2) and probably 6 low-molecular weight proteins. The cofactor is heme b.

It localises to the mitochondrion inner membrane. Component of the ubiquinol-cytochrome c reductase complex (complex III or cytochrome b-c1 complex) that is part of the mitochondrial respiratory chain. The b-c1 complex mediates electron transfer from ubiquinol to cytochrome c. Contributes to the generation of a proton gradient across the mitochondrial membrane that is then used for ATP synthesis. This is Cytochrome b (MT-CYB) from Coluber constrictor (Eastern racer).